The following is a 492-amino-acid chain: UPF0652 protein C22H10.08 (492 aa).

This sequence belongs to the UPF0652 family.

It localises to the cytoplasm. It is found in the nucleus. This chain is UPF0652 protein C22H10.08, found in Schizosaccharomyces pombe (strain 972 / ATCC 24843) (Fission yeast).